Here is a 253-residue protein sequence, read N- to C-terminus: Triosephosphate isomerase (253 aa).

Position 9–11 (9–11 (NWK)) interacts with substrate. H95 acts as the Electrophile in catalysis. E167 functions as the Proton acceptor in the catalytic mechanism. Residues G173, S213, and 234 to 235 (GG) each bind substrate. Phosphoserine is present on S213.

The protein belongs to the triosephosphate isomerase family. In terms of assembly, homodimer.

It is found in the cytoplasm. It catalyses the reaction D-glyceraldehyde 3-phosphate = dihydroxyacetone phosphate. It participates in carbohydrate biosynthesis; gluconeogenesis. The protein operates within carbohydrate degradation; glycolysis; D-glyceraldehyde 3-phosphate from glycerone phosphate: step 1/1. Involved in the gluconeogenesis. Catalyzes stereospecifically the conversion of dihydroxyacetone phosphate (DHAP) to D-glyceraldehyde-3-phosphate (G3P). The protein is Triosephosphate isomerase of Bacillus pumilus (strain SAFR-032).